A 566-amino-acid polypeptide reads, in one-letter code: Phosphatidylinositol 4-kinase gamma 4 (566 aa).

Ubiquitin-like domains follow at residues 34-111 and 112-190; these read TIMI…SDLQ and VLDV…AKVR. The segment covering 250 to 263 has biased composition (polar residues); the sequence is DGLKSGNSPVRSSE. Residues 250–272 form a disordered region; it reads DGLKSGNSPVRSSEGTGGAYFMQ. The PI3K/PI4K catalytic domain maps to 255-547; that stretch reads GNSPVRSSEG…AVLPGTSEAA (293 aa). Positions 261 to 267 are G-loop; sequence SSEGTGG. Residues 262–268, lysine 284, and 374–377 each bind ATP; these read SEGTGGA and QMFT. The interval 407–415 is catalytic loop; sequence ANADRHGGN. Residues 430–456 are activation loop; it reads PIDHGYCLPESFEDCTFEWLYWPQARK. Aspartate 432 is an ATP binding site.

The protein belongs to the PI3/PI4-kinase family. Type II PI4K subfamily. In terms of assembly, interacts with RPN10, UFD1 and CDC48 in vitro. Post-translationally, autophosphorylated.

It is found in the membrane. The enzyme catalyses a 1,2-diacyl-sn-glycero-3-phospho-(1D-myo-inositol) + ATP = a 1,2-diacyl-sn-glycero-3-phospho-(1D-myo-inositol 4-phosphate) + ADP + H(+). In terms of biological role, the phosphorylation of phosphatidylinositol (PI) to PI4P is the first committed step in the generation of phosphatidylinositol 4,5-bisphosphate (PIP2), a precursor of the second messenger inositol 1,4,5-trisphosphate (InsP3). Undergoes autophosphorylation and phosphorylates serine/threonine residues of protein substrates. Phosphorylates RPN10 and UFD1 in vitro. The sequence is that of Phosphatidylinositol 4-kinase gamma 4 from Arabidopsis thaliana (Mouse-ear cress).